Reading from the N-terminus, the 439-residue chain is Innexin-19 (439 aa).

A run of 4 helical transmembrane segments spans residues 33-53 (PLILAVCCLVISAKQYGGTPI), 103-123 (QWVPFILIAEALMFSLPCIFW), 199-219 (IVYSFTKLLYSVNVVAQFFIL), and 285-305 (VFAFLWCWYMILAIITTCSFI).

This sequence belongs to the pannexin family.

The protein localises to the cell membrane. It is found in the cell junction. The protein resides in the gap junction. Its function is as follows. Structural component of the gap junctions that specifically coordinates left-right asymmetry in the developing nervous system. Acts by forming gap junction network linking embryonic neurons and providing electrical coupling between cells, leading to promote or inhibit AWC signaling. This chain is Innexin-19 (inx-19), found in Caenorhabditis briggsae.